A 411-amino-acid polypeptide reads, in one-letter code: Protein translocase subunit SecY (411 aa).

10 helical membrane passes run 13 to 33 (FTLLLLVLARLGIFIPVPGID), 52 to 72 (IFSGGGFSTIGIFALGIVPYI), 111 to 131 (ALGWATLQSGAISIWVKPYVF), 135 to 155 (FTFVCESVLALTAGSMIIMWL), 163 to 180 (GIGNGASLLIFQNIVSGL), 197 to 217 (SIKFGLFIVIFLLMIIITIFV), 252 to 272 (GVMPIVFASASMALPAYLTQL), 291 to 311 (LYLVLYSVLILFFSYFYTSIV), 350 to 370 (FLGATFLFTVALIPFIIEKVA), and 377 to 397 (GLGATSLLILVGVAIDTAKQI).

It belongs to the SecY/SEC61-alpha family. As to quaternary structure, component of the plastid Sec protein translocase complex, which is composed of at least SecY, SecE and SecG.

It is found in the plastid. The protein resides in the chloroplast thylakoid membrane. The central subunit of the protein translocation channel SecYE. Consists of two halves formed by TMs 1-5 and 6-10. These two domains form a lateral gate at the front which open onto the bilayer between TMs 2 and 7, and are clamped together by SecE at the back. The channel is closed by both a pore ring composed of hydrophobic SecY resides and a short helix (helix 2A) on the extracellular side of the membrane which forms a plug. In Porphyra purpurea (Red seaweed), this protein is Protein translocase subunit SecY.